We begin with the raw amino-acid sequence, 299 residues long: ATP phosphoribosyltransferase (299 aa).

Belongs to the ATP phosphoribosyltransferase family. Long subfamily. Equilibrium between an active dimeric form, an inactive hexameric form and higher aggregates. Interconversion between the various forms is largely reversible and is influenced by the natural substrates and inhibitors of the enzyme. Requires Mg(2+) as cofactor.

The protein localises to the cytoplasm. The catalysed reaction is 1-(5-phospho-beta-D-ribosyl)-ATP + diphosphate = 5-phospho-alpha-D-ribose 1-diphosphate + ATP. It functions in the pathway amino-acid biosynthesis; L-histidine biosynthesis; L-histidine from 5-phospho-alpha-D-ribose 1-diphosphate: step 1/9. With respect to regulation, feedback inhibited by histidine. Catalyzes the condensation of ATP and 5-phosphoribose 1-diphosphate to form N'-(5'-phosphoribosyl)-ATP (PR-ATP). Has a crucial role in the pathway because the rate of histidine biosynthesis seems to be controlled primarily by regulation of HisG enzymatic activity. The chain is ATP phosphoribosyltransferase from Escherichia coli O157:H7.